A 333-amino-acid polypeptide reads, in one-letter code: Delta(9)-fatty-acid desaturase fat-5 (333 aa).

Transmembrane regions (helical) follow at residues 42-62, 66-86, 187-207, and 210-230; these read NVALFVALHIGALVGLYQLVF, WATVGWVFLLHTLGSMGVTGG, LPLVGIFCFALPTFIPVVLWG, and AFIAFYTAALFRYCFTLHATW.

It belongs to the fatty acid desaturase type 1 family. Expressed in the intestine in adult worms and in all four larval stages. Additional expression in the pharynx and tail cells after hatching and throughout the lifespan.

It localises to the membrane. It carries out the reaction hexadecanoyl-CoA + 2 Fe(II)-[cytochrome b5] + O2 + 2 H(+) = (9Z)-hexadecenoyl-CoA + 2 Fe(III)-[cytochrome b5] + 2 H2O. The catalysed reaction is tetradecanoyl-CoA + 2 Fe(II)-[cytochrome b5] + O2 + 2 H(+) = (9Z)-tetradecenoyl-CoA + 2 Fe(III)-[cytochrome b5] + 2 H2O. It catalyses the reaction heptadecanoyl-CoA + 2 Fe(II)-[cytochrome b5] + O2 + 2 H(+) = (9Z)-heptadecenoyl-CoA + 2 Fe(III)-[cytochrome b5] + 2 H2O. The enzyme catalyses pentadecanoyl-CoA + 2 Fe(II)-[cytochrome b5] + O2 + 2 H(+) = (9Z)-pentadecenoyl-CoA + 2 Fe(III)-[cytochrome b5] + 2 H2O. The protein operates within lipid metabolism; monounsaturated fatty acid biosynthesis. Functionally, delta(9)-fatty acid desaturase that acts preferentially on palmitoyl-CoA (hexadecanoyl-CoA) producing the monounsaturated palmitoleoyl-CoA ((9Z)-hexadecenoyl-CoA), which can be elongated to (11Z)-octadecenoyl-CoA (the most abundant monounsaturated fatty acid in Caenorhabditis elegans phospholipids and triacylglycerols). Also acts on pentadecanoyl-CoA, heptadecanoyl-CoA and myristoyl-CoA (tetradecanoyl-CoA), the monounsaturated fatty acids (MUFAs) produced are further used as substrates to synthesize polyunsaturated fatty acids (PUFAs) by several other desaturases and elongases. Unlike plants, Caenorhabditis elegans desaturases seem to use fatty acyl-CoAs as substrates. The protein is Delta(9)-fatty-acid desaturase fat-5 (fat-5) of Caenorhabditis elegans.